The following is a 291-amino-acid chain: Formamidopyrimidine-DNA glycosylase (291 aa).

The Schiff-base intermediate with DNA role is filled by P2. Residue E3 is the Proton donor of the active site. K58 serves as the catalytic Proton donor; for beta-elimination activity. Positions 100, 123, and 166 each coordinate DNA. Residues 257 to 291 (SVYGREGKECLQCGTPIIRILQSGRSSFYCSQCQK) form an FPG-type zinc finger. Catalysis depends on R281, which acts as the Proton donor; for delta-elimination activity.

This sequence belongs to the FPG family. As to quaternary structure, monomer. Requires Zn(2+) as cofactor.

It carries out the reaction Hydrolysis of DNA containing ring-opened 7-methylguanine residues, releasing 2,6-diamino-4-hydroxy-5-(N-methyl)formamidopyrimidine.. It catalyses the reaction 2'-deoxyribonucleotide-(2'-deoxyribose 5'-phosphate)-2'-deoxyribonucleotide-DNA = a 3'-end 2'-deoxyribonucleotide-(2,3-dehydro-2,3-deoxyribose 5'-phosphate)-DNA + a 5'-end 5'-phospho-2'-deoxyribonucleoside-DNA + H(+). Its function is as follows. Involved in base excision repair of DNA damaged by oxidation or by mutagenic agents. Acts as a DNA glycosylase that recognizes and removes damaged bases. Has a preference for oxidized purines, such as 7,8-dihydro-8-oxoguanine (8-oxoG). Has AP (apurinic/apyrimidinic) lyase activity and introduces nicks in the DNA strand. Cleaves the DNA backbone by beta-delta elimination to generate a single-strand break at the site of the removed base with both 3'- and 5'-phosphates. In Bartonella tribocorum (strain CIP 105476 / IBS 506), this protein is Formamidopyrimidine-DNA glycosylase.